Here is a 395-residue protein sequence, read N- to C-terminus: E3 ubiquitin-protein ligase NHLRC1 (395 aa).

The RING-type zinc-finger motif lies at 26–72 (CKVCFEKFGHRQQRRPRNLSCGHVVCLACVAALAHPRTLALECPFCR). NHL repeat units follow at residues 113–157 (ALTC…FDSG), 161–204 (AHQF…FDFF), 205–245 (GQIK…LDVD), 248–300 (EGVL…FSSS), 301–349 (MQLV…LGKP), and 350–393 (EEFP…YKVD).

In terms of assembly, interacts with AGL. Interacts (via the NHL repeats) with EPM2A/laforin. Forms a complex with EPM2A/laforin and HSP70. Interacts with PRDM8. Expressed in brain, cerebellum, spinal cord, medulla, heart, liver, skeletal muscle and pancreas.

Its subcellular location is the endoplasmic reticulum. The protein localises to the nucleus. The catalysed reaction is S-ubiquitinyl-[E2 ubiquitin-conjugating enzyme]-L-cysteine + [acceptor protein]-L-lysine = [E2 ubiquitin-conjugating enzyme]-L-cysteine + N(6)-ubiquitinyl-[acceptor protein]-L-lysine.. Its pathway is protein modification; protein ubiquitination. In terms of biological role, E3 ubiquitin-protein ligase. Together with the phosphatase EPM2A/laforin, appears to be involved in the clearance of toxic polyglucosan and protein aggregates via multiple pathways. In complex with EPM2A/laforin and HSP70, suppresses the cellular toxicity of misfolded proteins by promoting their degradation through the ubiquitin-proteasome system (UPS). Ubiquitinates the glycogen-targeting protein phosphatase subunits PPP1R3C/PTG and PPP1R3D in a laforin-dependent manner and targets them for proteasome-dependent degradation, thus decreasing glycogen accumulation. Polyubiquitinates EPM2A/laforin and ubiquitinates AGL and targets them for proteasome-dependent degradation. Also promotes proteasome-independent protein degradation through the macroautophagy pathway. The sequence is that of E3 ubiquitin-protein ligase NHLRC1 (NHLRC1) from Homo sapiens (Human).